Here is a 470-residue protein sequence, read N- to C-terminus: Glutamate--tRNA ligase (470 aa).

Residues 9–19 (PSPTGFLHVGG) carry the 'HIGH' region motif. Positions 236–240 (KLSKR) match the 'KMSKS' region motif. ATP is bound at residue K239.

The protein belongs to the class-I aminoacyl-tRNA synthetase family. Glutamate--tRNA ligase type 1 subfamily. Monomer.

Its subcellular location is the cytoplasm. The catalysed reaction is tRNA(Glu) + L-glutamate + ATP = L-glutamyl-tRNA(Glu) + AMP + diphosphate. In terms of biological role, catalyzes the attachment of glutamate to tRNA(Glu) in a two-step reaction: glutamate is first activated by ATP to form Glu-AMP and then transferred to the acceptor end of tRNA(Glu). The chain is Glutamate--tRNA ligase from Psychromonas ingrahamii (strain DSM 17664 / CCUG 51855 / 37).